We begin with the raw amino-acid sequence, 286 residues long: ATP synthase gamma chain (286 aa).

The protein belongs to the ATPase gamma chain family. As to quaternary structure, F-type ATPases have 2 components, CF(1) - the catalytic core - and CF(0) - the membrane proton channel. CF(1) has five subunits: alpha(3), beta(3), gamma(1), delta(1), epsilon(1). CF(0) has three main subunits: a, b and c.

Its subcellular location is the cell inner membrane. In terms of biological role, produces ATP from ADP in the presence of a proton gradient across the membrane. The gamma chain is believed to be important in regulating ATPase activity and the flow of protons through the CF(0) complex. This chain is ATP synthase gamma chain, found in Pseudomonas aeruginosa (strain UCBPP-PA14).